A 380-amino-acid polypeptide reads, in one-letter code: Glucose-1-phosphate adenylyltransferase (380 aa).

Alpha-D-glucose 1-phosphate-binding positions include G164, 179–180 (EK), and S190.

The protein belongs to the bacterial/plant glucose-1-phosphate adenylyltransferase family. In terms of assembly, homotetramer.

It carries out the reaction alpha-D-glucose 1-phosphate + ATP + H(+) = ADP-alpha-D-glucose + diphosphate. It participates in glycan biosynthesis; glycogen biosynthesis. Functionally, involved in the biosynthesis of ADP-glucose, a building block required for the elongation reactions to produce glycogen. Catalyzes the reaction between ATP and alpha-D-glucose 1-phosphate (G1P) to produce pyrophosphate and ADP-Glc. In Streptococcus gordonii (strain Challis / ATCC 35105 / BCRC 15272 / CH1 / DL1 / V288), this protein is Glucose-1-phosphate adenylyltransferase.